The primary structure comprises 503 residues: MAAQALALLREVSRLEAPLEELRALQSLLQSVPLSELREQAAELRLGPLFSLLNENHREQTTLCVSILERLLQALEPVHVARNLRVDLQRGLTHPNDSVKILTLSQVGRIVENSDAVTEILNNAELLKQIVYCIGGENLSVAKTAIKSLSRISLTQAGLEALFESNLLDDLKSVMKTNDIVRYRVYELIVEISSVSPESLNCCTTSGLVTQLLRELTGEDVLVRATCIEMVTSLACTHHGRQYLAQEGVIDQISNIIVGADADPFSSFYLPGFVKFFGNLAIMDSPQQICERYPIFMEKVFEMTESQDPTMIGVAVDTIGILGSNVEGKQVLQKTGTRFERLLMKIGYQAKNASTELKIRCLDALSSLFYLPPEQTDDLLRMTESWFSSLSRDPLELFRGISNQPFPELHCAALKVFTAIANQPWAQKLMFNSPGFVEYVMDRSVEHDKASKDAKYELVKALANSKTIAEIFGNPNYLRLRTYLSEGPYYVKPISTTAVEGAE.

The residue at position 2 (alanine 2) is an N-acetylalanine.

This sequence belongs to the proteasome subunit S5B/HSM3 family. Interacts with PSMC1, PSMC2, PSMD1 and PSMD6. Part of transient complex containing PSMD5, PSMC2, PSMC1 and PSMD2 formed during the assembly of the 26S proteasome.

In terms of biological role, acts as a chaperone during the assembly of the 26S proteasome, specifically of the base subcomplex of the PA700/19S regulatory complex (RC). In the initial step of the base subcomplex assembly is part of an intermediate PSMD5:PSMC2:PSMC1:PSMD2 module which probably assembles with a PSMD10:PSMC4:PSMC5:PAAF1 module followed by dissociation of PSMD5. The chain is 26S proteasome non-ATPase regulatory subunit 5 (PSMD5) from Bos taurus (Bovine).